We begin with the raw amino-acid sequence, 116 residues long: Protein MGF 110-2L (116 aa).

Positions 1–19 (MRFFSYLGLLLAGLASLAS) are cleaved as a signal peptide.

This sequence belongs to the asfivirus MGF 110 family.

In terms of biological role, plays a role in virus cell tropism, and may be required for efficient virus replication in macrophages. The polypeptide is Protein MGF 110-2L (Ornithodoros (relapsing fever ticks)).